The primary structure comprises 618 residues: uncharacterized protein (618 aa).

The segment at 1-45 (MSSKSASKLKREAKKAERLAAKGESVKPSKKNGTKNGKDKEVDGV) is disordered. 2 stretches are compositionally biased toward basic and acidic residues: residues 14–27 (KKAERLAAKGESVK) and 36–45 (NGKDKEVDGV). S50 and S53 each carry phosphoserine. Residue T54 is modified to Phosphothreonine. 2 positions are modified to phosphoserine: S55 and S64. ABC transporter domains are found at residues 76-325 (IKID…LKQQ) and 388-609 (IAFN…QSRD). Residues 108-115 (GDNGSGKS) and 423-430 (GKNGTGKS) each bind ATP.

Belongs to the ABC transporter superfamily.

It is found in the cytoplasm. This is an uncharacterized protein from Schizosaccharomyces pombe (strain 972 / ATCC 24843) (Fission yeast).